Reading from the N-terminus, the 185-residue chain is Elongation factor P (185 aa).

It belongs to the elongation factor P family.

It localises to the cytoplasm. Its pathway is protein biosynthesis; polypeptide chain elongation. Functionally, involved in peptide bond synthesis. Stimulates efficient translation and peptide-bond synthesis on native or reconstituted 70S ribosomes in vitro. Probably functions indirectly by altering the affinity of the ribosome for aminoacyl-tRNA, thus increasing their reactivity as acceptors for peptidyl transferase. In Mesomycoplasma hyopneumoniae (strain 7448) (Mycoplasma hyopneumoniae), this protein is Elongation factor P.